Consider the following 388-residue polypeptide: Succinate--CoA ligase [ADP-forming] subunit beta (388 aa).

The ATP-grasp domain maps to 9 to 244 (KQLFSRYGLP…PSQEDPREAQ (236 aa)). ATP is bound by residues Lys-46, 53–55 (GRG), Glu-99, Thr-102, and Glu-107. Positions 199 and 213 each coordinate Mg(2+). Substrate contacts are provided by residues Asn-264 and 321–323 (GIV).

This sequence belongs to the succinate/malate CoA ligase beta subunit family. Heterotetramer of two alpha and two beta subunits. The cofactor is Mg(2+).

It carries out the reaction succinate + ATP + CoA = succinyl-CoA + ADP + phosphate. The enzyme catalyses GTP + succinate + CoA = succinyl-CoA + GDP + phosphate. Its pathway is carbohydrate metabolism; tricarboxylic acid cycle; succinate from succinyl-CoA (ligase route): step 1/1. Functionally, succinyl-CoA synthetase functions in the citric acid cycle (TCA), coupling the hydrolysis of succinyl-CoA to the synthesis of either ATP or GTP and thus represents the only step of substrate-level phosphorylation in the TCA. The beta subunit provides nucleotide specificity of the enzyme and binds the substrate succinate, while the binding sites for coenzyme A and phosphate are found in the alpha subunit. The sequence is that of Succinate--CoA ligase [ADP-forming] subunit beta from Proteus mirabilis (strain HI4320).